Consider the following 316-residue polypeptide: MANLKDIRDRIVSVKNTRKITEAMRLVAAAKVRRAQEQVLRSRPFADRLARVLENIQSRMSFEMADAPLLKTSDLKTITLLAVTGDRGLCGGYNSNIIKRTEQRYAELNGQGYKVDLVLIGRKAITYFSNRSSQYTIRATFTGLEQVPTSDDAESITTEVLAEFLSQSTDRIEVIYTKFINLVSCNPVVQTLLPLDPQGIAEADDEIFRLTTKDSRLTVEKGVGPANEQPPLPSDIIFEQSPEQLLNALLPLYLQNQMLRALQESAASELASRMTAMNNASDNAKALAKTLTLDYNKARQAAITQEILEVVGGSCT.

Belongs to the ATPase gamma chain family. As to quaternary structure, F-type ATPases have 2 components, CF(1) - the catalytic core - and CF(0) - the membrane proton channel. CF(1) has five subunits: alpha(3), beta(3), gamma(1), delta(1), epsilon(1). CF(0) has three main subunits: a, b and c.

Its subcellular location is the cellular thylakoid membrane. Functionally, produces ATP from ADP in the presence of a proton gradient across the membrane. The gamma chain is believed to be important in regulating ATPase activity and the flow of protons through the CF(0) complex. The sequence is that of ATP synthase gamma chain from Prochlorococcus marinus (strain MIT 9313).